The following is a 187-amino-acid chain: Elongation factor P (187 aa).

This sequence belongs to the elongation factor P family.

The protein localises to the cytoplasm. It participates in protein biosynthesis; polypeptide chain elongation. Functionally, involved in peptide bond synthesis. Stimulates efficient translation and peptide-bond synthesis on native or reconstituted 70S ribosomes in vitro. Probably functions indirectly by altering the affinity of the ribosome for aminoacyl-tRNA, thus increasing their reactivity as acceptors for peptidyl transferase. The sequence is that of Elongation factor P (efp) from Mycobacterium bovis (strain ATCC BAA-935 / AF2122/97).